A 185-amino-acid chain; its full sequence is uncharacterized protein (185 aa).

Positions 9 to 169 constitute an N-acetyltransferase domain; it reads VILELAKESD…NGREDDKPLL (161 aa).

This is an uncharacterized protein from Bacillus subtilis (strain 168).